The sequence spans 514 residues: 2,3-bisphosphoglycerate-independent phosphoglycerate mutase (514 aa).

2 residues coordinate Mn(2+): aspartate 14 and serine 64. Serine 64 acts as the Phosphoserine intermediate in catalysis. Residues histidine 125, 155-156 (RD), arginine 187, arginine 193, 263-266 (RADR), and lysine 337 contribute to the substrate site. Mn(2+) is bound by residues aspartate 404, histidine 408, aspartate 445, histidine 446, and histidine 464.

The protein belongs to the BPG-independent phosphoglycerate mutase family. In terms of assembly, monomer. It depends on Mn(2+) as a cofactor.

It catalyses the reaction (2R)-2-phosphoglycerate = (2R)-3-phosphoglycerate. It functions in the pathway carbohydrate degradation; glycolysis; pyruvate from D-glyceraldehyde 3-phosphate: step 3/5. In terms of biological role, catalyzes the interconversion of 2-phosphoglycerate and 3-phosphoglycerate. The protein is 2,3-bisphosphoglycerate-independent phosphoglycerate mutase of Pseudoalteromonas translucida (strain TAC 125).